A 144-amino-acid polypeptide reads, in one-letter code: Nucleoside diphosphate kinase (144 aa).

Residues Lys11, Phe59, Arg87, Thr93, Arg104, and Asn114 each coordinate ATP. Residue His117 is the Pros-phosphohistidine intermediate of the active site.

The protein belongs to the NDK family. As to quaternary structure, homotetramer. It depends on Mg(2+) as a cofactor.

Its subcellular location is the cytoplasm. It carries out the reaction a 2'-deoxyribonucleoside 5'-diphosphate + ATP = a 2'-deoxyribonucleoside 5'-triphosphate + ADP. It catalyses the reaction a ribonucleoside 5'-diphosphate + ATP = a ribonucleoside 5'-triphosphate + ADP. Major role in the synthesis of nucleoside triphosphates other than ATP. The ATP gamma phosphate is transferred to the NDP beta phosphate via a ping-pong mechanism, using a phosphorylated active-site intermediate. The sequence is that of Nucleoside diphosphate kinase from Coxiella burnetii (strain CbuG_Q212) (Coxiella burnetii (strain Q212)).